Reading from the N-terminus, the 244-residue chain is Fumarate reductase iron-sulfur subunit (244 aa).

Residue tyrosine 14 coordinates a menaquinone. Residues proline 16–phenylalanine 97 form the 2Fe-2S ferredoxin-type domain. [2Fe-2S] cluster contacts are provided by cysteine 58, cysteine 63, cysteine 66, and cysteine 78. A 4Fe-4S ferredoxin-type domain is found at methionine 140–isoleucine 169. [4Fe-4S] cluster is bound by residues cysteine 149, cysteine 152, and cysteine 155. [3Fe-4S] cluster contacts are provided by cysteine 159, cysteine 205, and cysteine 211. Cysteine 215 is a [4Fe-4S] cluster binding site. Glutamine 226–lysine 229 lines the a menaquinone pocket.

Belongs to the succinate dehydrogenase/fumarate reductase iron-sulfur protein family. As to quaternary structure, fumarate dehydrogenase forms part of an enzyme complex containing four subunits: a flavoprotein, an iron-sulfur, and two hydrophobic anchor proteins. [2Fe-2S] cluster is required as a cofactor. [3Fe-4S] cluster serves as cofactor. It depends on [4Fe-4S] cluster as a cofactor.

The protein localises to the cell inner membrane. It catalyses the reaction a quinone + succinate = fumarate + a quinol. The enzyme catalyses a menaquinone + succinate = a menaquinol + fumarate. In terms of biological role, two distinct, membrane-bound, FAD-containing enzymes are responsible for the catalysis of fumarate and succinate interconversion; the fumarate reductase is used in anaerobic growth, and the succinate dehydrogenase is used in aerobic growth. This chain is Fumarate reductase iron-sulfur subunit (frdB), found in Escherichia coli O157:H7.